A 30-amino-acid polypeptide reads, in one-letter code: Cyclotide vdif-A (30 aa).

Residues 1–30 (GIPCGESCVFIPCISSVVGCSCKSKVCYRN) constitute a cross-link (cyclopeptide (Gly-Asn)). Cystine bridges form between cysteine 4–cysteine 20, cysteine 8–cysteine 22, and cysteine 13–cysteine 27.

It belongs to the cyclotide family. Bracelet subfamily. In terms of processing, this is a cyclic peptide.

Functionally, probably participates in a plant defense mechanism. This Viola diffusa protein is Cyclotide vdif-A.